Consider the following 665-residue polypeptide: GRB2-associated-binding protein 2 (665 aa).

S2 carries the post-translational modification Phosphoserine. The PH domain maps to 8–119 (DVVCTGWLRK…WVQSICQICG (112 aa)). The disordered stretch occupies residues 131–184 (RNLSSASHGPRSSPAEFSSSQHLLRERKSSAPSHSSQPTLFTFEPPVSSHMQPT). S135, S142, S143, S149, S150, S160, S165, S211, S220, and S261 each carry phosphoserine. The span at 160-170 (SAPSHSSQPTL) shows a compositional bias: polar residues. At T262 the chain carries Phosphothreonine. At Y263 the chain carries Phosphotyrosine. The residue at position 275 (T275) is a Phosphothreonine. 2 positions are modified to phosphoserine: S278 and S282. T284 is subject to Phosphothreonine. Position 290 is a phosphotyrosine (Y290). T328 bears the Phosphothreonine mark. The interval 338–396 (VATPGDSAIAPPPRPPKPSQAETSQWGSIQQRPPISENSRSVAATIPRRNTLPAMDNSR) is disordered. Residues 348 to 355 (PPPRPPKP) carry the SH3-binding motif. The span at 357–379 (QAETSQWGSIQQRPPISENSRSV) shows a compositional bias: polar residues. At S365 the chain carries Phosphoserine. Phosphothreonine is present on residues T382 and T388. A Phosphoserine modification is found at S402. T405 bears the Phosphothreonine mark. A disordered region spans residues 408–445 (YPARGSGESASWSAEPPGKTAVGRSNSASSDDNYVPMN). Position 420 is a phosphoserine (S420). Residues 430–439 (GRSNSASSDD) show a composition bias toward polar residues. Y441 is subject to Phosphotyrosine. S469 is subject to Phosphoserine. The disordered stretch occupies residues 491-517 (PSRGSEIQPPPVNRNLKPDRKAKPTPL). Positions 499-508 (PPPVNRNLKP) match the SH3-binding motif. S532 bears the Phosphoserine mark. Composition is skewed to polar residues over residues 548 to 566 (SSSQYCRPISTQSITSTDS) and 578 to 600 (NPVSASPVPSGTNSPAPKKSTGS). 2 disordered regions span residues 548–632 (SSSQ…KVDY) and 646–665 (TMQEWTDVRQSSEPSKGAKL). S612 bears the Phosphoserine mark. Residue Y632 is modified to Phosphotyrosine. Residues 646 to 659 (TMQEWTDVRQSSEP) are compositionally biased toward polar residues.

This sequence belongs to the GAB family. In terms of assembly, part of a complex composed of EEIG1, TNFRSF11A/RANK, PLCG2, GAB2, TEC and BTK; complex formation increases in the presence of TNFSF11/RANKL. Interacts with HCK. Interacts with SHC1; may mediate interaction with receptors. Interacts with SYK. Interacts with PI-3 kinase. Interacts with GRB2 (via SH3 2 domain). Interacts (phosphorylated) with PTPN11. Interacts with TNFRSF11A (via cytoplasmic domain). Interacts (phosphorylated) with 14-3-3 family proteins SFN, YWHAB, YWHAE, YWHAG, YWHAH, YWHAQ and YWHAZ; prevents interaction with GRB2 and attenuates GAB2 signaling. In terms of processing, phosphorylated upon EGF stimulation. Phosphorylated on tyrosine residues by HCK upon IL6 signaling. Phosphorylated on tyrosine residue(s) by the thrombopoietin receptor (TPOR), stem cell factor receptor (SCFR), and T-cell and B-cell antigen receptors, gp130, IL-2R and IL-3R. Phosphorylated upon stimulation of TNFRSF11A/RANK by TNFSF11/RANKL. Dephosphorylated by PTPN11. As to expression, ubiquitously expressed.

It is found in the cytoplasm. The protein localises to the cell membrane. Its subcellular location is the membrane raft. Its function is as follows. Adapter protein which acts downstream of several membrane receptors including cytokine, antigen, hormone, cell matrix and growth factor receptors to regulate multiple signaling pathways. Regulates osteoclast differentiation mediating the TNFRSF11A/RANK signaling. In allergic response, it plays a role in mast cells activation and degranulation through PI-3-kinase regulation. Also involved in the regulation of cell proliferation and hematopoiesis. This chain is GRB2-associated-binding protein 2 (Gab2), found in Mus musculus (Mouse).